The sequence spans 250 residues: Cholesterol ring-cleaving hydrolase IpdB subunit (250 aa).

The protein belongs to the 3-oxoacid CoA-transferase subunit B family. Heterotetramer composed of 2 IpdA subunits and 2 IpdB subunits.

The catalysed reaction is (3E)-2-(2-carboxylatoethyl)-3-methyl-6-oxocyclohex-1-ene-1-carboxyl-CoA + H2O = 6-methyl-3,7-dioxodecanedioyl-CoA. It participates in steroid metabolism; cholesterol degradation. In terms of biological role, involved in the final steps of cholesterol and steroid degradation. Opens the last steroid ring of cholesterol by catalyzing the hydrolysis of (3E)-2-(2-carboxylatoethyl)-3-methyl-6-oxocyclohex-1-ene-1-carboxyl-CoA (COCHEA-CoA) to 6-methyl-3,7-dioxodecanedioyl-CoA (MeDODA-CoA). The polypeptide is Cholesterol ring-cleaving hydrolase IpdB subunit (Mycobacterium bovis (strain ATCC BAA-935 / AF2122/97)).